The sequence spans 257 residues: NAD kinase (257 aa).

The active-site Proton acceptor is Asp-46. NAD(+) is bound by residues 46–47 (DG), 116–117 (NE), Asp-146, Ala-154, 157–162 (TAYNLS), and Asn-218.

This sequence belongs to the NAD kinase family. A divalent metal cation is required as a cofactor.

The protein resides in the cytoplasm. It catalyses the reaction NAD(+) + ATP = ADP + NADP(+) + H(+). In terms of biological role, involved in the regulation of the intracellular balance of NAD and NADP, and is a key enzyme in the biosynthesis of NADP. Catalyzes specifically the phosphorylation on 2'-hydroxyl of the adenosine moiety of NAD to yield NADP. This Brucella melitensis biotype 1 (strain ATCC 23456 / CCUG 17765 / NCTC 10094 / 16M) protein is NAD kinase.